The sequence spans 314 residues: Small glutamine-rich tetratricopeptide repeat-containing protein alpha (314 aa).

The tract at residues 65–99 is disordered; sequence ATASKEMPQDPRGPDRTPPSEEDSAEAERLKTEGN. Positions 71 to 83 are enriched in basic and acidic residues; that stretch reads MPQDPRGPDRTPP. T81 carries the post-translational modification Phosphothreonine. Position 84 is a phosphoserine (S84). Residues 90–99 are compositionally biased toward basic and acidic residues; sequence EAERLKTEGN. TPR repeat units lie at residues 91–124, 125–158, and 159–192; these read AERL…NPAN, AVYF…DPGY, and SKAY…DPDN. Residue K137 is modified to N6-acetyllysine. A disordered region spans residues 249 to 268; sequence GMISGGHNPLGTPGSSPQHS. At S302 the chain carries Phosphoserine. Position 304 is a phosphothreonine (T304). A Phosphoserine modification is found at S306.

Belongs to the SGT family. As to quaternary structure, homodimer. Homooligomer. Interacts with DNAJC5 and DNAJC5B. Interacts (via TPR repeats) with HSP90AA1. Interacts (via Gln-rich region) with SLC2A1. Interacts with HSP90AB1. Interacts (via TPR repeats) with HSPA8/Hsc70; the interaction is direct. Interacts with BAG6 (via ubiquitin-like domain); interaction prevents interaction between BAG6 and RNF126. Forms a multiprotein complex, at least composed of DNAJB12, DNAJB14, HSPA8/Hsc70 and SGTA; interaction with DNAJB14 and HSPA8/Hsc70 is direct. (Microbial infection) Interacts with NS1 from parvovirus H-1. As to expression, ubiquitously expressed.

The protein localises to the cytoplasm. Its subcellular location is the nucleus. Co-chaperone that binds misfolded and hydrophobic patches-containing client proteins in the cytosol. Mediates their targeting to the endoplasmic reticulum but also regulates their sorting to the proteasome when targeting fails. Functions in tail-anchored/type II transmembrane proteins membrane insertion constituting with ASNA1 and the BAG6 complex a targeting module. Functions upstream of the BAG6 complex and ASNA1, binding more rapidly the transmembrane domain of newly synthesized proteins. It is also involved in the regulation of the endoplasmic reticulum-associated misfolded protein catabolic process via its interaction with BAG6: collaborates with the BAG6 complex to maintain hydrophobic substrates in non-ubiquitinated states. Competes with RNF126 for interaction with BAG6, preventing the ubiquitination of client proteins associated with the BAG6 complex. Binds directly to HSC70 and HSP70 and regulates their ATPase activity. The sequence is that of Small glutamine-rich tetratricopeptide repeat-containing protein alpha (Sgta) from Rattus norvegicus (Rat).